Reading from the N-terminus, the 391-residue chain is 3-ketoacyl-CoA thiolase (391 aa).

Cys95 (acyl-thioester intermediate) is an active-site residue. Active-site proton acceptor residues include His347 and Cys377.

Belongs to the thiolase-like superfamily. Thiolase family. Heterotetramer of two alpha chains (FadB) and two beta chains (FadA).

It localises to the cytoplasm. It carries out the reaction an acyl-CoA + acetyl-CoA = a 3-oxoacyl-CoA + CoA. It functions in the pathway lipid metabolism; fatty acid beta-oxidation. In terms of biological role, catalyzes the final step of fatty acid oxidation in which acetyl-CoA is released and the CoA ester of a fatty acid two carbons shorter is formed. In Pseudomonas entomophila (strain L48), this protein is 3-ketoacyl-CoA thiolase.